Reading from the N-terminus, the 408-residue chain is Interferon-activable protein 203 (408 aa).

Positions 1-87 (MAEYKNIVLL…AKKLKTEKAK (87 aa)) constitute a Pyrin domain. The tract at residues 84–208 (EKAKVQEKKK…EGHHQGPKQV (125 aa)) is disordered. Residues 92-102 (KKGKCKTAGKK) show a composition bias toward basic residues. The segment covering 150-159 (AQLPETSGTN) has biased composition (polar residues). In terms of domain architecture, HIN-200 spans 190–388 (TVPKEPSREE…SVRHSYMQVI (199 aa)).

This sequence belongs to the HIN-200 family. In terms of tissue distribution, constitutively expressed in the thymus, bone marrow and spleen. Isoform 1 and isoform 3 are present in liver (at protein level).

It is found in the nucleus. This chain is Interferon-activable protein 203 (Ifi203), found in Mus musculus (Mouse).